A 110-amino-acid chain; its full sequence is UPF0060 membrane protein Psyr_3752 (110 aa).

Helical transmembrane passes span 5–25 (LWFF…WLWL), 28–48 (GKSA…ALLL), 59–79 (AYAA…GLVE), and 84–104 (LGTD…ILLG).

Belongs to the UPF0060 family.

It is found in the cell inner membrane. The sequence is that of UPF0060 membrane protein Psyr_3752 from Pseudomonas syringae pv. syringae (strain B728a).